Reading from the N-terminus, the 266-residue chain is Small ribosomal subunit protein uS3 (266 aa).

The KH type-2 domain occupies 39-107 (VREYLKKKLK…PVHVNIEEIR (69 aa)). The interval 218-266 (EVAEDKRPRRNARPGDRRPRRDGEGGAPGARRGAPRRGAGKPEDGKTGE) is disordered. Basic and acidic residues-rich tracts occupy residues 230–241 (RPGDRRPRRDGE) and 257–266 (GKPEDGKTGE).

This sequence belongs to the universal ribosomal protein uS3 family. Part of the 30S ribosomal subunit. Forms a tight complex with proteins S10 and S14.

Its function is as follows. Binds the lower part of the 30S subunit head. Binds mRNA in the 70S ribosome, positioning it for translation. This chain is Small ribosomal subunit protein uS3, found in Burkholderia ambifaria (strain MC40-6).